A 456-amino-acid chain; its full sequence is Probable flavin-containing monoamine oxidase A (456 aa).

The residue at position 394 (cysteine 394) is an S-8alpha-FAD cysteine.

This sequence belongs to the flavin monoamine oxidase family. Requires FAD as cofactor.

The enzyme catalyses a secondary aliphatic amine + O2 + H2O = a primary amine + an aldehyde + H2O2. This Dictyostelium discoideum (Social amoeba) protein is Probable flavin-containing monoamine oxidase A (maoA).